The primary structure comprises 122 residues: Large ribosomal subunit protein uL14 (122 aa).

It belongs to the universal ribosomal protein uL14 family. In terms of assembly, part of the 50S ribosomal subunit. Forms a cluster with proteins L3 and L19. In the 70S ribosome, L14 and L19 interact and together make contacts with the 16S rRNA in bridges B5 and B8.

Binds to 23S rRNA. Forms part of two intersubunit bridges in the 70S ribosome. The protein is Large ribosomal subunit protein uL14 of Malacoplasma penetrans (strain HF-2) (Mycoplasma penetrans).